Reading from the N-terminus, the 510-residue chain is Flavonoid 3',5'-hydroxylase (510 aa).

Cys-447 lines the heme pocket.

Belongs to the cytochrome P450 family. Heme is required as a cofactor.

The enzyme catalyses a 3',5'-unsubstituted flavanone + 2 reduced [NADPH--hemoprotein reductase] + 2 O2 = a 3',5'-dihydroxyflavanone + 2 oxidized [NADPH--hemoprotein reductase] + 2 H2O + 2 H(+). It functions in the pathway pigment biosynthesis; anthocyanin biosynthesis. Its function is as follows. Catalyzes the 3'5'-hydroxylation of naringenin and eriodictyol to form 5,7,3,'4',5'-pentahydroxyflavanone and 3',5'-hydroxylation of dihydrokaempferol and dihydroquercetin to form dihydromyricetin. The sequence is that of Flavonoid 3',5'-hydroxylase (CYP75A5) from Eustoma exaltatum subsp. russellianum (Bluebells).